The following is a 1204-amino-acid chain: Cingulin (1204 aa).

The interval 7–359 (MAEPRGPVDH…VMMSSGSSKA (353 aa)) is head. Residues 25-48 (EPVSGAEMGTLRRGGRRPAKDARA) form a disordered region. Positions 48-62 (ASTYGVAVRVQGIAG) match the ZIM motif. The interval 54 to 67 (AVRVQGIAGQPFVV) is interaction with TJP1/ZO1. The tract at residues 68–269 (LNSGEKGGDS…SPLSGLSRAR (202 aa)) is disordered. A phosphoserine mark is found at S95, S96, S98, S135, S137, S140, S155, and S165. Residues 126 to 140 (TQWNGKLLRSQSQAS) show a composition bias toward polar residues. The segment covering 166–190 (PGSTIDTAPLSSVDSLINKFDSQLR) has biased composition (polar residues). Basic and acidic residues predominate over residues 207–231 (EQRKRSKSLDSRLPRDTLEERERQS). 6 positions are modified to phosphoserine: S214, S217, S260, S278, S340, and S353. Residues 360-1161 (VAGQGELTRK…SLEKDSWRKA (802 aa)) are a coiled coil. K581 bears the N6-acetyllysine mark. A disordered region spans residues 1156 to 1182 (DSWRKASRSAAESTLKHEGLSSDEEFD). A tail region spans residues 1162–1204 (SRSAAESTLKHEGLSSDEEFDGVYDPSSIASLLTESNLQTSSC). A phosphoserine mark is found at S1176 and S1177.

It belongs to the cingulin family. As to quaternary structure, homodimer. Interacts with TJP1/ZO1 and SPEF1.

It is found in the cell junction. Its subcellular location is the tight junction. Its function is as follows. Probably plays a role in the formation and regulation of the tight junction (TJ) paracellular permeability barrier. In Callithrix jacchus (White-tufted-ear marmoset), this protein is Cingulin.